A 310-amino-acid chain; its full sequence is HMG box-containing protein C28F2.11 (310 aa).

Over residues 69–95 (ESPSKKATSPKKATPAAVAPVEATSAV) the composition is skewed to low complexity. Residues 69-310 (ESPSKKATSP…TTPPTAKVAN (242 aa)) are disordered. Residue Ser70 is modified to Phosphoserine. At Thr105 the chain carries Phosphothreonine. The segment at residues 117–187 (PKRPPSAYNL…AYEEEMAAYN (71 aa)) is a DNA-binding region (HMG box). Composition is skewed to basic and acidic residues over residues 131–178 (QRSE…LREA) and 200–226 (VTAE…DFSE). Residues Ser161, Ser214, and Ser215 each carry the phosphoserine modification. 2 positions are modified to phosphothreonine: Thr217 and Thr237. Residues 255-268 (STVPTSNVEPVSQP) show a composition bias toward polar residues. Ser271, Ser278, Ser294, Ser295, and Ser297 each carry phosphoserine. Phosphothreonine is present on residues Thr302 and Thr305.

Its subcellular location is the cytoplasm. In Schizosaccharomyces pombe (strain 972 / ATCC 24843) (Fission yeast), this protein is HMG box-containing protein C28F2.11.